We begin with the raw amino-acid sequence, 394 residues long: Ceramide glucosyltransferase (394 aa).

Residues 1–10 (MAVLDLALQG) lie on the Lumenal side of the membrane. The chain crosses the membrane as a helical span at residues 11–32 (LAIFGCVLFFVLWFMHFLSIVY). Over 33-195 (TRLHLNKKVS…QVYFGTSHPR (163 aa)) the chain is Cytoplasmic. Asp-92 is a short sequence motif (D1). Residue Asp-144 is a short sequence motif, D2. A helical membrane pass occupies residues 196–215 (SYISANVTGFKCVTGMSCLM). The Lumenal segment spans residues 216 to 287 (RKEVLDQAGG…KLRINMLPAT (72 aa)). Residue Asp-236 is a short sequence motif, D3. Asp-236 (proton acceptor) is an active-site residue. The (Q/R)XXRW signature appears at 272-276 (RMIRW). The helical transmembrane segment at 288–304 (IICEPISECFVASLIIG) threads the bilayer. Over 305 to 309 (WAAHH) the chain is Cytoplasmic. A helical transmembrane segment spans residues 310-328 (IFRWDIMVFFMCHCLAWFI). The Lumenal portion of the chain corresponds to 329-348 (FDYIQLRGVQGGPLNFSKLD). Residues 349 to 369 (YAVAWFIRESMTIYIFLSALW) traverse the membrane as a helical segment. The Cytoplasmic segment spans residues 370–394 (DPTISWRTGRYRLRCGGTAEEILDV).

It belongs to the glycosyltransferase 2 family.

The protein localises to the golgi apparatus membrane. It carries out the reaction an N-acylsphing-4-enine + UDP-alpha-D-glucose = a beta-D-glucosyl-(1&lt;-&gt;1')-N-acylsphing-4-enine + UDP + H(+). The catalysed reaction is UDP-alpha-D-xylose + an N-acylsphing-4-enine = a beta-D-xylosyl-(1&lt;-&gt;1')-N-acylsphing-4-enine + UDP + H(+). The enzyme catalyses N-(9Z-octadecenoyl)-sphing-4-enine + UDP-alpha-D-xylose = beta-D-xylosyl-(1&lt;-&gt;1')-N-(9Z-octadecenoyl)-sphing-4-enine + UDP + H(+). The protein operates within lipid metabolism; sphingolipid metabolism. Its function is as follows. Participates in the initial step of the glucosylceramide-based glycosphingolipid/GSL synthetic pathway at the cytosolic surface of the Golgi. Catalyzes the transfer of glucose from UDP-glucose to ceramide to produce glucosylceramide/GlcCer (such as beta-D-glucosyl-(1&lt;-&gt;1')-N-acylsphing-4-enine). Glucosylceramide is the core component of glycosphingolipids/GSLs, amphipathic molecules consisting of a ceramide lipid moiety embedded in the outer leaflet of the membrane, linked to one of hundreds of different externally oriented oligosaccharide structures. Glycosphingolipids are essential components of membrane microdomains that mediate membrane trafficking and signal transduction. They are implicated in many fundamental cellular processes, including growth, differentiation, migration, morphogenesis, cell-to-cell and cell-to-matrix interactions. Catalyzes the synthesis of xylosylceramide/XylCer (such as beta-D-xylosyl-(1&lt;-&gt;1')-N-acylsphing-4-enine) using UDP-Xyl as xylose donor. This chain is Ceramide glucosyltransferase (ugcg), found in Xenopus tropicalis (Western clawed frog).